The chain runs to 365 residues: Histidinol-phosphate aminotransferase (365 aa).

K227 bears the N6-(pyridoxal phosphate)lysine mark.

This sequence belongs to the class-II pyridoxal-phosphate-dependent aminotransferase family. Histidinol-phosphate aminotransferase subfamily. In terms of assembly, homodimer. The cofactor is pyridoxal 5'-phosphate.

The catalysed reaction is L-histidinol phosphate + 2-oxoglutarate = 3-(imidazol-4-yl)-2-oxopropyl phosphate + L-glutamate. It participates in amino-acid biosynthesis; L-histidine biosynthesis; L-histidine from 5-phospho-alpha-D-ribose 1-diphosphate: step 7/9. The sequence is that of Histidinol-phosphate aminotransferase from Campylobacter concisus (strain 13826).